A 364-amino-acid chain; its full sequence is MSDEGSRGSRLPLALPPASQGCSSGGGGGGGGGGSSSAGGSGNPRPPRNLQGLLQMAITAGSEEPDPPPEPMSEERRQWLQEAMSAAFRGQREEVEQMKSCLRVLSQPMPPTAGEAEQAADQQEREGALELLADLCENMDNAADFCQLSGMHLLVGRYLEAGAAGLRWRAAQLIGTCSQNVAAIQEQVLGLGALRKLLRLLDRDACDTVRVKALFAISCLVREQEAGLLQFLRLDGFSVLMRAMQQQVQKLKVKSAFLLQNLLVGHPEHRGTLCSMGMVQQLVALVRTEHSPFHEHVLGALCSLVTDFPQGVRECREPELGLEELLRHRCQLLQQHEEYQEELEFCEKLLQTCFSSPTDDSMDR.

The disordered stretch occupies residues 1–75 (MSDEGSRGSR…DPPPEPMSEE (75 aa)). Positions 23 to 42 (SSGGGGGGGGGGSSSAGGSG) are enriched in gly residues. ARM repeat units follow at residues 137-179 (ENMD…TCSQ), 182-222 (AAIQ…CLVR), 225-264 (EAGL…NLLV), and 267-306 (PEHR…SLVT). A phosphoserine mark is found at S356 and S361.

As to quaternary structure, interacts with the ATP-binding domain of HSPA1A. Detected in a ternary complex containing STUB1, HSPA1A and HSPBP1. Interacts with PGLYRP1; this interaction blocks the cytotoxic activity of the PGLYRP1-HSPA1A complex.

In terms of biological role, inhibits HSPA1A chaperone activity by changing the conformation of the ATP-binding domain of HSPA1A and interfering with ATP binding. Interferes with ubiquitination mediated by STUB1 and inhibits chaperone-assisted degradation of target proteins. The chain is Hsp70-binding protein 1 (HSPBP1) from Macaca fascicularis (Crab-eating macaque).